Reading from the N-terminus, the 207-residue chain is Segregation and condensation protein B (207 aa).

Positions D173–Q207 are disordered.

It belongs to the ScpB family. As to quaternary structure, homodimer. Homodimerization may be required to stabilize the binding of ScpA to the Smc head domains. Component of a cohesin-like complex composed of ScpA, ScpB and the Smc homodimer, in which ScpA and ScpB bind to the head domain of Smc. The presence of the three proteins is required for the association of the complex with DNA.

Its subcellular location is the cytoplasm. Its function is as follows. Participates in chromosomal partition during cell division. May act via the formation of a condensin-like complex containing Smc and ScpA that pull DNA away from mid-cell into both cell halves. In Latilactobacillus sakei subsp. sakei (strain 23K) (Lactobacillus sakei subsp. sakei), this protein is Segregation and condensation protein B.